Here is a 145-residue protein sequence, read N- to C-terminus: Ribosomal protein uL24-like (145 aa).

2 disordered regions span residues 1–21 (MKFN…HFNA) and 122–145 (KAKS…KMQE). Residues lysine 136 and lysine 142 each participate in a glycyl lysine isopeptide (Lys-Gly) (interchain with G-Cter in SUMO2) cross-link.

The protein belongs to the universal ribosomal protein uL24 family.

The protein is Ribosomal protein uL24-like (RPL26L1) of Homo sapiens (Human).